The sequence spans 275 residues: NAD kinase (275 aa).

Aspartate 53 serves as the catalytic Proton acceptor. NAD(+) contacts are provided by residues 53–54, 129–130, arginine 155, aspartate 157, and 168–173; these read DG, NE, and TAYNKS.

The protein belongs to the NAD kinase family. A divalent metal cation is required as a cofactor.

Its subcellular location is the cytoplasm. It carries out the reaction NAD(+) + ATP = ADP + NADP(+) + H(+). Involved in the regulation of the intracellular balance of NAD and NADP, and is a key enzyme in the biosynthesis of NADP. Catalyzes specifically the phosphorylation on 2'-hydroxyl of the adenosine moiety of NAD to yield NADP. This Streptococcus agalactiae serotype Ia (strain ATCC 27591 / A909 / CDC SS700) protein is NAD kinase.